The chain runs to 157 residues: Transcription elongation factor GreB (157 aa).

The protein belongs to the GreA/GreB family. GreB subfamily.

In terms of biological role, necessary for efficient RNA polymerase transcription elongation past template-encoded arresting sites. The arresting sites in DNA have the property of trapping a certain fraction of elongating RNA polymerases that pass through, resulting in locked ternary complexes. Cleavage of the nascent transcript by cleavage factors such as GreA or GreB allows the resumption of elongation from the new 3'terminus. GreB releases sequences of up to 9 nucleotides in length. The protein is Transcription elongation factor GreB of Salmonella typhi.